The primary structure comprises 268 residues: HTH-type transcriptional activator RhaS (268 aa).

Residues Arg171–Ile268 form the HTH araC/xylS-type domain. DNA-binding regions (H-T-H motif) lie at residues Glu188–Thr209 and Ile236–Tyr259.

As to quaternary structure, binds DNA as a dimer.

It is found in the cytoplasm. In terms of biological role, activates expression of the rhaBAD and rhaT operons. The chain is HTH-type transcriptional activator RhaS from Mannheimia succiniciproducens (strain KCTC 0769BP / MBEL55E).